We begin with the raw amino-acid sequence, 478 residues long: Siroheme synthase (478 aa).

Positions 1-207 (MTANVLFPLF…QRHAEAEAVL (207 aa)) are precorrin-2 dehydrogenase /sirohydrochlorin ferrochelatase. NAD(+) contacts are provided by residues 25–26 (KV) and 46–47 (PS). Serine 132 is subject to Phosphoserine. The interval 220–478 (GSVTLVGAGA…PCPPRTHPIS (259 aa)) is uroporphyrinogen-III C-methyltransferase. Aspartate 252 acts as the Proton acceptor in catalysis. Catalysis depends on lysine 274, which acts as the Proton donor. S-adenosyl-L-methionine-binding positions include 305–307 (GGD), valine 310, 335–336 (TA), methionine 387, and glycine 416.

This sequence in the N-terminal section; belongs to the precorrin-2 dehydrogenase / sirohydrochlorin ferrochelatase family. It in the C-terminal section; belongs to the precorrin methyltransferase family.

The catalysed reaction is uroporphyrinogen III + 2 S-adenosyl-L-methionine = precorrin-2 + 2 S-adenosyl-L-homocysteine + H(+). It carries out the reaction precorrin-2 + NAD(+) = sirohydrochlorin + NADH + 2 H(+). The enzyme catalyses siroheme + 2 H(+) = sirohydrochlorin + Fe(2+). It functions in the pathway cofactor biosynthesis; adenosylcobalamin biosynthesis; precorrin-2 from uroporphyrinogen III: step 1/1. It participates in cofactor biosynthesis; adenosylcobalamin biosynthesis; sirohydrochlorin from precorrin-2: step 1/1. The protein operates within porphyrin-containing compound metabolism; siroheme biosynthesis; precorrin-2 from uroporphyrinogen III: step 1/1. Its pathway is porphyrin-containing compound metabolism; siroheme biosynthesis; siroheme from sirohydrochlorin: step 1/1. It functions in the pathway porphyrin-containing compound metabolism; siroheme biosynthesis; sirohydrochlorin from precorrin-2: step 1/1. In terms of biological role, multifunctional enzyme that catalyzes the SAM-dependent methylations of uroporphyrinogen III at position C-2 and C-7 to form precorrin-2 via precorrin-1. Then it catalyzes the NAD-dependent ring dehydrogenation of precorrin-2 to yield sirohydrochlorin. Finally, it catalyzes the ferrochelation of sirohydrochlorin to yield siroheme. This Xylella fastidiosa (strain M23) protein is Siroheme synthase.